Consider the following 218-residue polypeptide: Non-structural protein NS3 (218 aa).

It belongs to the orbivirus NS3 family.

Its function is as follows. May play a role in the release of virions from infected cells. In Camelus dromedarius (Dromedary), this protein is Non-structural protein NS3 (Segment-10).